Here is a 369-residue protein sequence, read N- to C-terminus: mRNA cap guanine-N(7) methyltransferase 1 (369 aa).

Positions 1 to 55 (MNKRPRDEPSSSFASAPKRQYGAGGGGYGGHGYSEERSSARRVADHYSARSNQTL) are disordered. Positions 22–32 (GAGGGGYGGHG) are enriched in gly residues. Basic and acidic residues predominate over residues 33–48 (YSEERSSARRVADHYS). Residues 61–340 (SPIIHLKKLN…LYLAFVLRKR (280 aa)) form the mRNA cap 0 methyltransferase domain. 70 to 71 (NN) is a binding site for mRNA. S-adenosyl-L-methionine-binding positions include Lys74, Ala92, Asp114, 149-150 (DC), and 171-173 (QFA).

It belongs to the class I-like SAM-binding methyltransferase superfamily. mRNA cap 0 methyltransferase family.

The protein resides in the nucleus. It carries out the reaction a 5'-end (5'-triphosphoguanosine)-ribonucleoside in mRNA + S-adenosyl-L-methionine = a 5'-end (N(7)-methyl 5'-triphosphoguanosine)-ribonucleoside in mRNA + S-adenosyl-L-homocysteine. Functionally, mRNA-capping methyltransferase that methylates the N7 position of the added guanosine to the 5'-cap structure of mRNAs. Binds RNA containing 5'-terminal GpppC. This chain is mRNA cap guanine-N(7) methyltransferase 1, found in Oryza sativa subsp. japonica (Rice).